The primary structure comprises 591 residues: Acetyltransferase spyB (591 aa).

N-linked (GlcNAc...) asparagine glycosylation is present at Asn-114. Transmembrane regions (helical) follow at residues 123-143 (GTII…LIFL), 168-188 (TLLY…ILIL), 199-219 (LWIF…ISHG), 228-248 (VGVQ…INPL), 309-329 (SAFL…LNCA), 383-403 (ASIL…PLFG), 453-473 (IFFV…LMGI), 481-501 (ILFF…QAAW), and 529-549 (LVGF…WLCP).

This sequence belongs to the wax synthase family.

Its subcellular location is the membrane. It catalyses the reaction sartorypyrone F + acetyl-CoA = sartorypyrone G + CoA. The catalysed reaction is sartorypyrone D + acetyl-CoA = sartorypyrone A + CoA. It functions in the pathway secondary metabolite biosynthesis; terpenoid biosynthesis. In terms of biological role, acetyltransferase; part of the gene cluster that mediates the biosynthesis of meroterpenoids called sartorypyrones. SpyB catalyzes the last step of the pathway and is responsible for the acetylation of sartorypyrones D and F to produce sartorypyrones A and G, respectively. The biosynthesis of sartorypyrones begins with the production of triacetic acid lactone (TAL) by the NR-PKS spyA using one molecule of acetyl-CoA and two molecules of malonyl-CoA. The prenyltransferase spyF then conjugates geranylgeranyl pyrophosphate (GGPP) to TAL to form geranylgeranyl-triacetate lactone, for which the pathway-specific geranylgeranyl pyrophosphate synthase (GGPS) spyE is required to provide GGPP. Subsequently, geranylgeranyl-triacetate lactone is epoxidized at the terminal olein by the FAD-dependent monooxygenase spyC, followed by cyclization of the terpenoid component catalyzed by the terpene cyclase spyD to produce both the bicyclic sartorypyrone F and the monocyclic sartorypyrone D. Finally, the last step of the biosynthesis involves the acetylation of the meroterpenoids sartorypyrones D and F by the acetyltransferase SpyB to produce sartorypyrones A and G, respectively. The chain is Acetyltransferase spyB from Aspergillus fumigatus (strain ATCC MYA-4609 / CBS 101355 / FGSC A1100 / Af293) (Neosartorya fumigata).